Consider the following 352-residue polypeptide: Holliday junction branch migration complex subunit RuvB (352 aa).

Positions 13 to 201 are large ATPase domain (RuvB-L); that stretch reads FSLRKKELRL…FGISQKIEFY (189 aa). ATP contacts are provided by residues R41, G82, K85, T86, T87, 148-150, R191, Y201, and R238; that span reads EDF. T86 contributes to the Mg(2+) binding site. The interval 202 to 273 is small ATPAse domain (RuvB-S); the sequence is TYDELKQIIV…LIKKALNSYQ (72 aa). Residues 276-352 form a head domain (RuvB-H) region; the sequence is EKGLDSLDRN…KYIDSKNENF (77 aa). DNA is bound by residues R330 and R335.

This sequence belongs to the RuvB family. Homohexamer. Forms an RuvA(8)-RuvB(12)-Holliday junction (HJ) complex. HJ DNA is sandwiched between 2 RuvA tetramers; dsDNA enters through RuvA and exits via RuvB. An RuvB hexamer assembles on each DNA strand where it exits the tetramer. Each RuvB hexamer is contacted by two RuvA subunits (via domain III) on 2 adjacent RuvB subunits; this complex drives branch migration. In the full resolvosome a probable DNA-RuvA(4)-RuvB(12)-RuvC(2) complex forms which resolves the HJ.

Its subcellular location is the cytoplasm. It catalyses the reaction ATP + H2O = ADP + phosphate + H(+). The RuvA-RuvB-RuvC complex processes Holliday junction (HJ) DNA during genetic recombination and DNA repair, while the RuvA-RuvB complex plays an important role in the rescue of blocked DNA replication forks via replication fork reversal (RFR). RuvA specifically binds to HJ cruciform DNA, conferring on it an open structure. The RuvB hexamer acts as an ATP-dependent pump, pulling dsDNA into and through the RuvAB complex. RuvB forms 2 homohexamers on either side of HJ DNA bound by 1 or 2 RuvA tetramers; 4 subunits per hexamer contact DNA at a time. Coordinated motions by a converter formed by DNA-disengaged RuvB subunits stimulates ATP hydrolysis and nucleotide exchange. Immobilization of the converter enables RuvB to convert the ATP-contained energy into a lever motion, pulling 2 nucleotides of DNA out of the RuvA tetramer per ATP hydrolyzed, thus driving DNA branch migration. The RuvB motors rotate together with the DNA substrate, which together with the progressing nucleotide cycle form the mechanistic basis for DNA recombination by continuous HJ branch migration. Branch migration allows RuvC to scan DNA until it finds its consensus sequence, where it cleaves and resolves cruciform DNA. The chain is Holliday junction branch migration complex subunit RuvB from Prochlorococcus marinus (strain MIT 9215).